A 261-amino-acid polypeptide reads, in one-letter code: Glucose 1-dehydrogenase (261 aa).

11-35 (AITGAASGLGKAMAIRFGKEQAKVV) is an NADP(+) binding site. S145 contacts substrate. Y158 acts as the Proton acceptor in catalysis.

Belongs to the short-chain dehydrogenases/reductases (SDR) family. As to quaternary structure, homotetramer.

The enzyme catalyses D-glucose + NAD(+) = D-glucono-1,5-lactone + NADH + H(+). The catalysed reaction is D-glucose + NADP(+) = D-glucono-1,5-lactone + NADPH + H(+). The sequence is that of Glucose 1-dehydrogenase (gdh) from Bacillus subtilis (strain 168).